The sequence spans 861 residues: MQQQYNPSAIEPKVQQFWAENKVFKAVKDVTKEKYYCLSMLPYPSGKLHMGHVRNYTIGDVVSRYQRMIGKNVLQPMGWDAFGLPAEGAAVKNNTAPAKWTYENIEYMKGQLKMLGFSYDWDREVTTCRPEYYKWEQWFFTELYKKGLVYKKTSTVNWCPNDATVLANEQVHEGCCWRCDTPVEQREIPQWFIKITDYAEELLTHLDNLPQWPDQVKTMQRNWIGRSEGVEITFKIAGSNAELPVYTTRPDTFFGVSYVAIAAAHPLAEMAAENNPALAEFIREAKNTKVAEAELATMEKKGMATGLFAIHPLTGKEVPVWVANFVLMHYGTGAVMAVPAHDERDFEFAQKYGLQINQVIQPLDGSEWDFSKAAYTEHGKLINSAEFDDLNFEQAFNAIADKLESMKVGKRQVNFRLRDWGVSRQRYWGAPIPMMTTEDGEVVTVPMQDLPVILPEDVVMNGVQSPIKADPEWAKTTYNGKPALKETDTFDTFMESSWYYARYTCPQYHEGMLDSDEANYWLPVDQYIGGIEHATMHLLYFRFFHKLLRDAGILNSDEPATKLLCQGMVLADAFYYTSPTNERIWVSPTQVTLERDEKGRIIKATDPEGRELVHSGMTKMSKSKNNGIDPQEMVEKYGADTVRLFMMFASPAEMTLEWQESGVEGAKRFLGRVWNLVYEYSQNPATAALDVAALSKAQKELRRDVHKTIAKVSDDIGRRQTFNTAIAAIMELMNKLTKAPLENEQDKAVMAEALSAVVRMLYPITPHICFELWQALGNNDTIDFAPWVVADESAMVEDEKLVVVQVNGKVRGKVTVSATATEDEVKAIAKADANVAKFLEGVEIVKEIYVPYKMLSFAVKA.

The short motif at 42 to 52 (PYPSGKLHMGH) is the 'HIGH' region element. The 'KMSKS' region motif lies at 619–623 (KMSKS). Lys-622 contacts ATP.

Belongs to the class-I aminoacyl-tRNA synthetase family.

It is found in the cytoplasm. It carries out the reaction tRNA(Leu) + L-leucine + ATP = L-leucyl-tRNA(Leu) + AMP + diphosphate. The chain is Leucine--tRNA ligase from Actinobacillus pleuropneumoniae serotype 5b (strain L20).